Consider the following 367-residue polypeptide: MTLLKRISSPALLALALFGGAAHAALVPPQGYYEGIEKLKTGDGNFRCEAAPKPYTGALQFRSKYEGSDKARATLNVASEKAFRKSTEDITTLEKGVSKMVGQYMRDGRPAQLDCTLAWLGTWARADALLSTDYNHTGKSMRKWALGSMSGSWLRLKFSHSQPLAAHQAEAEVIEKWFARLAEQTVRDWSDLPLEKINNHSYWAAWSVMATAVATDRRDLFDWAVKEYKVGANQVDDQGFLPNEIKRKQRALAYHNYALPPLAMIASFAQANGVDLRKENNFALQRLGEGVLAGARDPSQFKARTGEKQDMKDLKVDSKYAWLEPWCELYHCVGDTLQRKHGMQPFNSFRLGGDLTRVYDPNAESKK.

The first 24 residues, 1-24 (MTLLKRISSPALLALALFGGAAHA), serve as a signal peptide directing secretion. Substrate-binding positions include 63–64 (SK), 136–137 (HT), and Tyr254.

This sequence belongs to the polysaccharide lyase 5 family.

The protein localises to the periplasm. It catalyses the reaction Eliminative cleavage of alginate to give oligosaccharides with 4-deoxy-alpha-L-erythro-hex-4-enuronosyl groups at their non-reducing ends and beta-D-mannuronate at their reducing end.. Its function is as follows. Catalyzes the depolymerization of alginate by cleaving the beta-1,4 glycosidic bond between two adjacent sugar residues via a beta-elimination mechanism. May serve to degrade mislocalized alginate that is trapped in the periplasmic space. The chain is Alginate lyase from Pseudomonas putida (strain GB-1).